A 227-amino-acid chain; its full sequence is ATP synthase F(0) complex subunit a (227 aa).

6 consecutive transmembrane segments (helical) span residues 14 to 34 (YLGI…FPLP), 69 to 89 (WALL…LGLL), 98 to 118 (QLSL…IIGL), 132 to 152 (EGTP…SLFI), 179 to 199 (VFVL…VLFL), and 202 to 222 (LLEV…LSLY).

Belongs to the ATPase A chain family. As to quaternary structure, component of the ATP synthase complex composed at least of ATP5F1A/subunit alpha, ATP5F1B/subunit beta, ATP5MC1/subunit c (homooctomer), MT-ATP6/subunit a, MT-ATP8/subunit 8, ATP5ME/subunit e, ATP5MF/subunit f, ATP5MG/subunit g, ATP5MK/subunit k, ATP5MJ/subunit j, ATP5F1C/subunit gamma, ATP5F1D/subunit delta, ATP5F1E/subunit epsilon, ATP5PF/subunit F6, ATP5PB/subunit b, ATP5PD/subunit d, ATP5PO/subunit OSCP. ATP synthase complex consists of a soluble F(1) head domain (subunits alpha(3) and beta(3)) - the catalytic core - and a membrane F(0) domain - the membrane proton channel (subunits c, a, 8, e, f, g, k and j). These two domains are linked by a central stalk (subunits gamma, delta, and epsilon) rotating inside the F1 region and a stationary peripheral stalk (subunits F6, b, d, and OSCP). Interacts with DNAJC30; interaction is direct.

It localises to the mitochondrion inner membrane. The enzyme catalyses H(+)(in) = H(+)(out). Its function is as follows. Subunit a, of the mitochondrial membrane ATP synthase complex (F(1)F(0) ATP synthase or Complex V) that produces ATP from ADP in the presence of a proton gradient across the membrane which is generated by electron transport complexes of the respiratory chain. ATP synthase complex consist of a soluble F(1) head domain - the catalytic core - and a membrane F(1) domain - the membrane proton channel. These two domains are linked by a central stalk rotating inside the F(1) region and a stationary peripheral stalk. During catalysis, ATP synthesis in the catalytic domain of F(1) is coupled via a rotary mechanism of the central stalk subunits to proton translocation. With the subunit c (ATP5MC1), forms the proton-conducting channel in the F(0) domain, that contains two crucial half-channels (inlet and outlet) that facilitate proton movement from the mitochondrial intermembrane space (IMS) into the matrix. Protons are taken up via the inlet half-channel and released through the outlet half-channel, following a Grotthuss mechanism. The sequence is that of ATP synthase F(0) complex subunit a from Formosania lacustris (Oriental stream loach).